The sequence spans 156 residues: Small ribosomal subunit protein uS7 (156 aa).

This sequence belongs to the universal ribosomal protein uS7 family. Part of the 30S ribosomal subunit. Contacts proteins S9 and S11.

In terms of biological role, one of the primary rRNA binding proteins, it binds directly to 16S rRNA where it nucleates assembly of the head domain of the 30S subunit. Is located at the subunit interface close to the decoding center, probably blocks exit of the E-site tRNA. The chain is Small ribosomal subunit protein uS7 from Cutibacterium acnes (strain DSM 16379 / KPA171202) (Propionibacterium acnes).